A 142-amino-acid chain; its full sequence is ATP synthase epsilon chain (142 aa).

It belongs to the ATPase epsilon chain family. In terms of assembly, F-type ATPases have 2 components, CF(1) - the catalytic core - and CF(0) - the membrane proton channel. CF(1) has five subunits: alpha(3), beta(3), gamma(1), delta(1), epsilon(1). CF(0) has three main subunits: a, b and c.

It is found in the cell inner membrane. Functionally, produces ATP from ADP in the presence of a proton gradient across the membrane. The chain is ATP synthase epsilon chain from Shewanella pealeana (strain ATCC 700345 / ANG-SQ1).